The following is a 270-amino-acid chain: UBX domain-containing protein 8 (270 aa).

A topological domain (cytoplasmic) is located at residue Met1. Residues 2 to 22 form a helical membrane-spanning segment; the sequence is ASRGVVGIFFLSAVPLVCLEL. Over 23-33 the chain is Lumenal; that stretch reads RRGIPDIGIKD. A helical transmembrane segment spans residues 34 to 54; it reads FLLLCGRILLLLALLTLIISV. The Cytoplasmic portion of the chain corresponds to 55-270; the sequence is TTSWLNSFKS…LILEEKEQTN (216 aa). Positions 130–171 are disordered; that stretch reads SGHKLGGDEGTSQTSFETSNREAAKSQNLPKPLTEFPSPAEQ. Ser167 is subject to Phosphoserine. A UBX domain is found at 187–263; the sequence is TAEEVVTVAL…GITVDTVLIL (77 aa).

As to quaternary structure, interacts with SYVN1 and VCP. Expressed abundantly in ovary and testis, and weakly in all other tissues tested.

It localises to the endoplasmic reticulum membrane. Functionally, involved in endoplasmic reticulum-associated degradation (ERAD) for misfolded lumenal proteins, possibly by tethering VCP to the endoplasmic reticulum membrane. May play a role in reproduction. The polypeptide is UBX domain-containing protein 8 (UBXN8) (Homo sapiens (Human)).